Reading from the N-terminus, the 331-residue chain is PTVYERMRVAEVFNGRLAMLAIVGCVYPELLGNGVWFEVWNKVDFYRFALISLQVVAPLEYWRGNGGFGWDGEEKYDRSYPGFDPCNLTTEYTKAAEIKNGRLAMIGMFGLEVQNHVTAQGPVANLIEHLRHPLAANIGANLAHPWPPVAMFATTGHKDGVWFPGAQPPAHLTGEYPADRGFDPLSVAADPTVYARMRVSEVFHARLSMLAIVGSIVPELLGKGAWFEVGNSVDGIKLGFILMAIAAPTEYWRGNGGFNWDKGTADRSYPGFDPLKLTTDYTKREIKNGRLAMTGLLGLTFQYLATGESPLANLAAHFANPVGANITTTLA.

Its subcellular location is the plastid. It is found in the chloroplast. The sequence is that of Light-harvesting complex I LH35 proteins from Euglena gracilis.